The sequence spans 262 residues: Small ribosomal subunit protein uS3 (262 aa).

One can recognise a KH type-2 domain in the interval 39-107; that stretch reads VREFLKKKLK…PVHVNIEEIR (69 aa). The interval 211-262 is disordered; the sequence is NDAPVVEEPQEERRKRPGRPEGRRREGEGRPAGQRRGAGAGARRGTDAKTGE. Over residues 221–239 the composition is skewed to basic and acidic residues; that stretch reads EERRKRPGRPEGRRREGEG.

This sequence belongs to the universal ribosomal protein uS3 family. In terms of assembly, part of the 30S ribosomal subunit. Forms a tight complex with proteins S10 and S14.

In terms of biological role, binds the lower part of the 30S subunit head. Binds mRNA in the 70S ribosome, positioning it for translation. This is Small ribosomal subunit protein uS3 from Ralstonia pickettii (strain 12J).